Reading from the N-terminus, the 428-residue chain is Serine--tRNA ligase (428 aa).

An L-serine-binding site is contributed by 235-237 (TAE). ATP is bound at residue 266–268 (RSE). Position 289 (glutamate 289) interacts with L-serine. 353-356 (EISS) is a binding site for ATP. Serine 389 contacts L-serine.

This sequence belongs to the class-II aminoacyl-tRNA synthetase family. Type-1 seryl-tRNA synthetase subfamily. In terms of assembly, homodimer. The tRNA molecule binds across the dimer.

The protein localises to the cytoplasm. The enzyme catalyses tRNA(Ser) + L-serine + ATP = L-seryl-tRNA(Ser) + AMP + diphosphate + H(+). The catalysed reaction is tRNA(Sec) + L-serine + ATP = L-seryl-tRNA(Sec) + AMP + diphosphate + H(+). It functions in the pathway aminoacyl-tRNA biosynthesis; selenocysteinyl-tRNA(Sec) biosynthesis; L-seryl-tRNA(Sec) from L-serine and tRNA(Sec): step 1/1. Its function is as follows. Catalyzes the attachment of serine to tRNA(Ser). Is also able to aminoacylate tRNA(Sec) with serine, to form the misacylated tRNA L-seryl-tRNA(Sec), which will be further converted into selenocysteinyl-tRNA(Sec). This chain is Serine--tRNA ligase, found in Shewanella sp. (strain W3-18-1).